A 93-amino-acid polypeptide reads, in one-letter code: Cobalt transport protein CbiN (93 aa).

Transmembrane regions (helical) follow at residues 5-25 (LMLL…NHGG) and 63-83 (LLFT…LGYC).

The protein belongs to the CbiN family. As to quaternary structure, forms an energy-coupling factor (ECF) transporter complex composed of an ATP-binding protein (A component, CbiO), a transmembrane protein (T component, CbiQ) and 2 possible substrate-capture proteins (S components, CbiM and CbiN) of unknown stoichimetry.

It localises to the cell inner membrane. Its pathway is cofactor biosynthesis; adenosylcobalamin biosynthesis. Functionally, part of the energy-coupling factor (ECF) transporter complex CbiMNOQ involved in cobalt import. This chain is Cobalt transport protein CbiN, found in Salmonella newport (strain SL254).